We begin with the raw amino-acid sequence, 369 residues long: UDP-N-acetylglucosamine--N-acetylmuramyl-(pentapeptide) pyrophosphoryl-undecaprenol N-acetylglucosamine transferase (369 aa).

Residues 15 to 17 (TGG), N126, R169, S197, and Q299 contribute to the UDP-N-acetyl-alpha-D-glucosamine site.

It belongs to the glycosyltransferase 28 family. MurG subfamily.

The protein resides in the cell inner membrane. It carries out the reaction di-trans,octa-cis-undecaprenyl diphospho-N-acetyl-alpha-D-muramoyl-L-alanyl-D-glutamyl-meso-2,6-diaminopimeloyl-D-alanyl-D-alanine + UDP-N-acetyl-alpha-D-glucosamine = di-trans,octa-cis-undecaprenyl diphospho-[N-acetyl-alpha-D-glucosaminyl-(1-&gt;4)]-N-acetyl-alpha-D-muramoyl-L-alanyl-D-glutamyl-meso-2,6-diaminopimeloyl-D-alanyl-D-alanine + UDP + H(+). It functions in the pathway cell wall biogenesis; peptidoglycan biosynthesis. Functionally, cell wall formation. Catalyzes the transfer of a GlcNAc subunit on undecaprenyl-pyrophosphoryl-MurNAc-pentapeptide (lipid intermediate I) to form undecaprenyl-pyrophosphoryl-MurNAc-(pentapeptide)GlcNAc (lipid intermediate II). This is UDP-N-acetylglucosamine--N-acetylmuramyl-(pentapeptide) pyrophosphoryl-undecaprenol N-acetylglucosamine transferase from Methylorubrum extorquens (strain CM4 / NCIMB 13688) (Methylobacterium extorquens).